The sequence spans 236 residues: LexA repressor (236 aa).

The H-T-H motif DNA-binding region spans 26–46 (FDEMKEALDLASKSGIHRLIT). Residues 84-107 (SPSVIEGGQGRSSPAPRPAANNDD) form a disordered region. Catalysis depends on for autocatalytic cleavage activity residues serine 157 and lysine 195.

This sequence belongs to the peptidase S24 family. Homodimer.

The enzyme catalyses Hydrolysis of Ala-|-Gly bond in repressor LexA.. In terms of biological role, represses a number of genes involved in the response to DNA damage (SOS response), including recA and lexA. In the presence of single-stranded DNA, RecA interacts with LexA causing an autocatalytic cleavage which disrupts the DNA-binding part of LexA, leading to derepression of the SOS regulon and eventually DNA repair. This is LexA repressor from Chelativorans sp. (strain BNC1).